We begin with the raw amino-acid sequence, 335 residues long: Glyceraldehyde-3-phosphate dehydrogenase 1 (335 aa).

NAD(+) contacts are provided by residues 12–13, Asp34, Arg78, and Ser120; that span reads RI. D-glyceraldehyde 3-phosphate contacts are provided by residues 151–153 and Thr182; that span reads SCT. Residue Cys152 is the Nucleophile of the active site. Asn183 serves as a coordination point for NAD(+). D-glyceraldehyde 3-phosphate is bound by residues Arg197, 210-211, and Arg233; that span reads TG. Residue Asn315 coordinates NAD(+).

This sequence belongs to the glyceraldehyde-3-phosphate dehydrogenase family. Homotetramer. Interacts with BrxC. Post-translationally, in response to oxidative stress, the active site Cys likely reacts with bacillithiol (BSH) to form mixed disulfides to protect the Cys residue against overoxidation. S-bacillithiolation presumably leads to loss of catalytic activity. Debacillithiolation by monothiol bacilliredoxin BrxC restores the activity.

It is found in the cytoplasm. The catalysed reaction is D-glyceraldehyde 3-phosphate + phosphate + NAD(+) = (2R)-3-phospho-glyceroyl phosphate + NADH + H(+). Its pathway is carbohydrate degradation; glycolysis; pyruvate from D-glyceraldehyde 3-phosphate: step 1/5. In terms of biological role, involved in the glycolysis. Catalyzes the oxidative phosphorylation of glyceraldehyde 3-phosphate (G3P) to 1,3-bisphosphoglycerate (BPG) using the cofactor NAD. The first reaction step involves the formation of a hemiacetal intermediate between G3P and a cysteine residue, and this hemiacetal intermediate is then oxidized to a thioester, with concomitant reduction of NAD to NADH. The reduced NADH is then exchanged with the second NAD, and the thioester is attacked by a nucleophilic inorganic phosphate to produce BPG. The polypeptide is Glyceraldehyde-3-phosphate dehydrogenase 1 (Bacillus subtilis (strain 168)).